Consider the following 192-residue polypeptide: Fe/S biogenesis protein NfuA (192 aa).

Positions 149 and 152 each coordinate [4Fe-4S] cluster.

This sequence belongs to the NfuA family. Homodimer. [4Fe-4S] cluster serves as cofactor.

Involved in iron-sulfur cluster biogenesis. Binds a 4Fe-4S cluster, can transfer this cluster to apoproteins, and thereby intervenes in the maturation of Fe/S proteins. Could also act as a scaffold/chaperone for damaged Fe/S proteins. This chain is Fe/S biogenesis protein NfuA, found in Shewanella sp. (strain MR-7).